The following is a 258-amino-acid chain: Imidazole glycerol phosphate synthase subunit HisF (258 aa).

Catalysis depends on residues aspartate 11 and aspartate 130.

It belongs to the HisA/HisF family. As to quaternary structure, heterodimer of HisH and HisF.

It localises to the cytoplasm. The catalysed reaction is 5-[(5-phospho-1-deoxy-D-ribulos-1-ylimino)methylamino]-1-(5-phospho-beta-D-ribosyl)imidazole-4-carboxamide + L-glutamine = D-erythro-1-(imidazol-4-yl)glycerol 3-phosphate + 5-amino-1-(5-phospho-beta-D-ribosyl)imidazole-4-carboxamide + L-glutamate + H(+). Its pathway is amino-acid biosynthesis; L-histidine biosynthesis; L-histidine from 5-phospho-alpha-D-ribose 1-diphosphate: step 5/9. In terms of biological role, IGPS catalyzes the conversion of PRFAR and glutamine to IGP, AICAR and glutamate. The HisF subunit catalyzes the cyclization activity that produces IGP and AICAR from PRFAR using the ammonia provided by the HisH subunit. The protein is Imidazole glycerol phosphate synthase subunit HisF of Escherichia coli O127:H6 (strain E2348/69 / EPEC).